Reading from the N-terminus, the 325-residue chain is NADH-quinone oxidoreductase subunit H (325 aa).

8 consecutive transmembrane segments (helical) span residues I11–F31, V81–V101, I114–G134, L154–F174, L186–V206, F237–F257, L265–I285, and V304–A324.

It belongs to the complex I subunit 1 family. In terms of assembly, NDH-1 is composed of 13 different subunits. Subunits NuoA, H, J, K, L, M, N constitute the membrane sector of the complex.

Its subcellular location is the cell inner membrane. The catalysed reaction is a quinone + NADH + 5 H(+)(in) = a quinol + NAD(+) + 4 H(+)(out). Functionally, NDH-1 shuttles electrons from NADH, via FMN and iron-sulfur (Fe-S) centers, to quinones in the respiratory chain. The immediate electron acceptor for the enzyme in this species is believed to be ubiquinone. Couples the redox reaction to proton translocation (for every two electrons transferred, four hydrogen ions are translocated across the cytoplasmic membrane), and thus conserves the redox energy in a proton gradient. This subunit may bind ubiquinone. The polypeptide is NADH-quinone oxidoreductase subunit H (Klebsiella pneumoniae (strain 342)).